A 360-amino-acid chain; its full sequence is F-box protein SKP2B (360 aa).

The F-box domain maps to 25 to 76 (ISEWKDIPVELLMKILNLVDDRTVIIASCICSGWRDAVSLGLTRLSLSWCKK). LRR repeat units lie at residues 77–99 (NMNS…VLRQ), 101–126 (KPQL…DLSK), 127–152 (SSKI…NLSG), 153–178 (CTSF…NLCG), 180–205 (VEAV…NLGW), 206–231 (CENI…DLCS), 232–257 (CVLI…GLYY), 258–301 (CRNI…NISQ), and 302–333 (CTYL…VMSG).

Its function is as follows. Component of SCF(SKP2B) E3 ubiquitin ligase complexes, which mediate the ubiquitination and subsequent proteasomal degradation of the cyclin-dependent kinase inhibitor KRP1. Does not interact with auxin. The chain is F-box protein SKP2B (SKP2B) from Arabidopsis thaliana (Mouse-ear cress).